The chain runs to 98 residues: UPF0473 protein GTNG_2486 (98 aa).

This sequence belongs to the UPF0473 family.

The chain is UPF0473 protein GTNG_2486 from Geobacillus thermodenitrificans (strain NG80-2).